Consider the following 408-residue polypeptide: RNA-splicing ligase RtcB (408 aa).

Asp-75, Cys-78, His-168, His-185, and His-281 together coordinate Mn(2+). 167-171 (NHFIE) lines the GMP pocket. GMP-binding positions include 281–282 (HN), 313–316 (PGSM), Ser-320, 337–340 (HGAG), and Lys-407. His-337 functions as the GMP-histidine intermediate in the catalytic mechanism.

This sequence belongs to the RtcB family. Monomer. Requires Mn(2+) as cofactor.

It carries out the reaction a 3'-end 3'-phospho-ribonucleotide-RNA + a 5'-end dephospho-ribonucleoside-RNA + GTP = a ribonucleotidyl-ribonucleotide-RNA + GMP + diphosphate. The enzyme catalyses a 3'-end 2',3'-cyclophospho-ribonucleotide-RNA + a 5'-end dephospho-ribonucleoside-RNA + GTP + H2O = a ribonucleotidyl-ribonucleotide-RNA + GMP + diphosphate + H(+). In terms of biological role, GTP-dependent RNA ligase that is involved in RNA repair. Joins RNA with 2',3'-cyclic-phosphate or 3'-phosphate ends to RNA with 5'-hydroxy ends. Also acts as a DNA ligase in case of DNA damage by splicing 'dirty' DNA breaks, characterized by 3'-phosphate (or cyclic-phosphate) and 5'-hydroxy ends that cannot be sealed by classical DNA ligases. Repairs tRNA cleaved by colicins D or E5, does not repair damaged 16S rRNA. Functionally, able to catalyze tRNA splicing in vivo in yeast, but bacteria are not known to splice tRNA. The protein is RNA-splicing ligase RtcB of Escherichia coli (strain K12).